Here is a 193-residue protein sequence, read N- to C-terminus: Ion-translocating oxidoreductase complex subunit A (193 aa).

A run of 6 helical transmembrane segments spans residues 5–25 (LLLL…FLGL), 39–59 (IGMG…SYLI), 63–83 (ILAP…VIAV), 102–122 (VLGI…VALL), 134–154 (IIYG…FSAM), and 171–191 (SIAM…TGLV).

This sequence belongs to the NqrDE/RnfAE family. The complex is composed of six subunits: RnfA, RnfB, RnfC, RnfD, RnfE and RnfG.

It localises to the cell inner membrane. In terms of biological role, part of a membrane-bound complex that couples electron transfer with translocation of ions across the membrane. The sequence is that of Ion-translocating oxidoreductase complex subunit A from Aliivibrio salmonicida (strain LFI1238) (Vibrio salmonicida (strain LFI1238)).